A 571-amino-acid polypeptide reads, in one-letter code: MRTSQFLLSTLKETPSDAVVISHQLMLRAGMIRKLASGLYTWMPMGLRALRKAEAIVREEMNKAGALEVLMPAIQPAELWQESGRWEQYGPELLRLKDRHDREFCVGPTHEEVITDLARNELNSYKQLPINFYQIQTKFRDEIRPRFGLMRGREFLMKDAYSFHLNQESLQETYDRMHQAYCNIFTRLGLNFRPVQADTGSIGGTGSHEFHVLAESGEDDIAFSDSSDYAANIEKAEAIPRETERAAPGEELRLIDTPDAKTIIELVEQFGVAVEKTVKTLVVHGVEKGQLVALIVRGDHELNEIKAANLAQVASPLVFASEAEIRAAIGAGPGSLGPLNLPIPCVIDRSVALMSDFSAGANIDDKHYLGLNWERDLPLPQVADLRNVVAGDPSPDGKGSLVIKRGIEVGHIFQLGTKYSEAMNCQVMGENGKPATLIMGCYGIGVSRVVAAAIEQNYDERGILWPDALAPFQIALVPMKYETEAVREATDKLYAELTAAGYEVLLDDRDKKTSPGVKFADMELIGIPHRIVVSDRGLADGMLEYKHRRDAQPQQVAVSDILSFINSRVHR.

This sequence belongs to the class-II aminoacyl-tRNA synthetase family. ProS type 1 subfamily. In terms of assembly, homodimer.

The protein resides in the cytoplasm. The catalysed reaction is tRNA(Pro) + L-proline + ATP = L-prolyl-tRNA(Pro) + AMP + diphosphate. Catalyzes the attachment of proline to tRNA(Pro) in a two-step reaction: proline is first activated by ATP to form Pro-AMP and then transferred to the acceptor end of tRNA(Pro). As ProRS can inadvertently accommodate and process non-cognate amino acids such as alanine and cysteine, to avoid such errors it has two additional distinct editing activities against alanine. One activity is designated as 'pretransfer' editing and involves the tRNA(Pro)-independent hydrolysis of activated Ala-AMP. The other activity is designated 'posttransfer' editing and involves deacylation of mischarged Ala-tRNA(Pro). The misacylated Cys-tRNA(Pro) is not edited by ProRS. The chain is Proline--tRNA ligase from Stutzerimonas stutzeri (strain A1501) (Pseudomonas stutzeri).